We begin with the raw amino-acid sequence, 314 residues long: uncharacterized protein (314 aa).

A signal peptide spans 1-18; that stretch reads MLIQILFLIILTLNCSYS. 4 N-linked (GlcNAc...) asparagine glycosylation sites follow: Asn-68, Asn-72, Asn-106, and Asn-256.

The protein localises to the secreted. This is an uncharacterized protein from Caenorhabditis elegans.